Here is an 89-residue protein sequence, read N- to C-terminus: Large ribosomal subunit protein uL24 (89 aa).

The protein belongs to the universal ribosomal protein uL24 family. As to quaternary structure, part of the 50S ribosomal subunit.

Its function is as follows. One of two assembly initiator proteins, it binds directly to the 5'-end of the 23S rRNA, where it nucleates assembly of the 50S subunit. Functionally, one of the proteins that surrounds the polypeptide exit tunnel on the outside of the subunit. This is Large ribosomal subunit protein uL24 from Oenococcus oeni (strain ATCC BAA-331 / PSU-1).